Here is a 73-residue protein sequence, read N- to C-terminus: Translation initiation factor IF-1 (73 aa).

The region spanning 1-73 (MPKKEGVIEI…TRGRIVYRYK (73 aa)) is the S1-like domain.

It belongs to the IF-1 family. Component of the 30S ribosomal translation pre-initiation complex which assembles on the 30S ribosome in the order IF-2 and IF-3, IF-1 and N-formylmethionyl-tRNA(fMet); mRNA recruitment can occur at any time during PIC assembly.

The protein localises to the cytoplasm. Functionally, one of the essential components for the initiation of protein synthesis. Stabilizes the binding of IF-2 and IF-3 on the 30S subunit to which N-formylmethionyl-tRNA(fMet) subsequently binds. Helps modulate mRNA selection, yielding the 30S pre-initiation complex (PIC). Upon addition of the 50S ribosomal subunit IF-1, IF-2 and IF-3 are released leaving the mature 70S translation initiation complex. The chain is Translation initiation factor IF-1 from Nocardioides sp. (strain ATCC BAA-499 / JS614).